Reading from the N-terminus, the 233-residue chain is MGQKVNPIGLRLGINRNWESRWFPTKANLVENIGEDYKIRAFLKRKLYYAGISQILVERTAKKLRVTVVAARPGIIIGKKGSDVDNLRKELQDLISKDVNINIKEERKAGASAQLAAESVATQLEKRIAFRRAMKKVIQGAQKAGAKGIKVSVSGRLGGAEMARTEWYLEGRVPLHTLRAKIDYGFAEARTTYGNIGVKVWIFKGEVLHKGMQPEKTEESAPAKKSRRTRRGK.

One can recognise a KH type-2 domain in the interval 39 to 107 (IRAFLKRKLY…DVNINIKEER (69 aa)). Over residues 212-222 (MQPEKTEESAP) the composition is skewed to basic and acidic residues. The tract at residues 212 to 233 (MQPEKTEESAPAKKSRRTRRGK) is disordered. Positions 224 to 233 (KKSRRTRRGK) are enriched in basic residues.

It belongs to the universal ribosomal protein uS3 family. In terms of assembly, part of the 30S ribosomal subunit. Forms a tight complex with proteins S10 and S14.

In terms of biological role, binds the lower part of the 30S subunit head. Binds mRNA in the 70S ribosome, positioning it for translation. The chain is Small ribosomal subunit protein uS3 from Campylobacter jejuni subsp. doylei (strain ATCC BAA-1458 / RM4099 / 269.97).